Reading from the N-terminus, the 295-residue chain is Protoheme IX farnesyltransferase (295 aa).

Transmembrane regions (helical) follow at residues 24 to 43 (IMYL…PGSI), 47 to 69 (LALI…NMWY), 94 to 114 (SALE…AIAV), 117 to 137 (ISAI…TIWL), 144 to 164 (NIVI…AVVT), 171 to 191 (GFVL…ALSL), 216 to 236 (KYIL…ALFL), 241 to 261 (FYLG…VSIM), and 272 to 292 (MFSY…LCSI).

The protein belongs to the UbiA prenyltransferase family. Protoheme IX farnesyltransferase subfamily.

It is found in the cell membrane. The catalysed reaction is heme b + (2E,6E)-farnesyl diphosphate + H2O = Fe(II)-heme o + diphosphate. It functions in the pathway porphyrin-containing compound metabolism; heme O biosynthesis; heme O from protoheme: step 1/1. In terms of biological role, converts heme B (protoheme IX) to heme O by substitution of the vinyl group on carbon 2 of heme B porphyrin ring with a hydroxyethyl farnesyl side group. In Wolbachia sp. subsp. Brugia malayi (strain TRS), this protein is Protoheme IX farnesyltransferase.